Here is a 268-residue protein sequence, read N- to C-terminus: 4-hydroxy-tetrahydrodipicolinate reductase (268 aa).

9–14 contacts NAD(+); that stretch reads GCSGRM. Arginine 36 serves as a coordination point for NADP(+). Residues 98–100 and 122–125 each bind NAD(+); these read GTT and APNT. The active-site Proton donor/acceptor is the histidine 155. Histidine 156 contacts (S)-2,3,4,5-tetrahydrodipicolinate. The active-site Proton donor is lysine 159. A (S)-2,3,4,5-tetrahydrodipicolinate-binding site is contributed by 165–166; sequence GT.

The protein belongs to the DapB family.

It is found in the cytoplasm. It carries out the reaction (S)-2,3,4,5-tetrahydrodipicolinate + NAD(+) + H2O = (2S,4S)-4-hydroxy-2,3,4,5-tetrahydrodipicolinate + NADH + H(+). The enzyme catalyses (S)-2,3,4,5-tetrahydrodipicolinate + NADP(+) + H2O = (2S,4S)-4-hydroxy-2,3,4,5-tetrahydrodipicolinate + NADPH + H(+). It participates in amino-acid biosynthesis; L-lysine biosynthesis via DAP pathway; (S)-tetrahydrodipicolinate from L-aspartate: step 4/4. In terms of biological role, catalyzes the conversion of 4-hydroxy-tetrahydrodipicolinate (HTPA) to tetrahydrodipicolinate. The chain is 4-hydroxy-tetrahydrodipicolinate reductase from Colwellia psychrerythraea (strain 34H / ATCC BAA-681) (Vibrio psychroerythus).